Consider the following 315-residue polypeptide: Cell division protein FtsZ (315 aa).

GTP contacts are provided by residues 55–57, Glu-98, Arg-102, and Asp-146; that span reads GTG.

The protein belongs to the FtsZ family. In terms of assembly, homodimer. Polymerizes to form a dynamic ring structure in a strictly GTP-dependent manner. Interacts directly with several other division proteins.

It is found in the cytoplasm. Functionally, essential cell division protein that forms a contractile ring structure (Z ring) at the future cell division site. The regulation of the ring assembly controls the timing and the location of cell division. One of the functions of the FtsZ ring is to recruit other cell division proteins to the septum to produce a new cell wall between the dividing cells. Binds GTP and shows GTPase activity. This Wolbachia pipientis protein is Cell division protein FtsZ.